Here is a 410-residue protein sequence, read N- to C-terminus: Class E basic helix-loop-helix protein 41 (410 aa).

Residue lysine 31 forms a Glycyl lysine isopeptide (Lys-Gly) (interchain with G-Cter in SUMO2) linkage. Positions 44 to 99 (TYKLPHRLIEKKRRDRINECIAQLKDLLPEHLKLTTLGHLEKAVVLELTLKHLKAL) constitute a bHLH domain. Lysine 121 is covalently cross-linked (Glycyl lysine isopeptide (Lys-Gly) (interchain with G-Cter in SUMO2)). Residues 131–166 (FHSGFQTCAKEVLQYLARFESWTPREPRCAQLVSHL) form the Orange domain. 2 disordered regions span residues 209–251 (IQRT…SAAP) and 371–410 (EVAPPGSLRPQHAHSRTHLPHAVNPESSQEDATQPAKDAP). Residue lysine 240 forms a Glycyl lysine isopeptide (Lys-Gly) (interchain with G-Cter in SUMO2) linkage.

As to quaternary structure, homodimer. Heterodimer with BHLHE40/DEC1. Interacts with CIART. Interacts with BMAL1 and RXRA. Interacts with NR0B2 and HNF1A. In terms of tissue distribution, highly expressed in the caudate putamen, pineal gland, granular cell layer of the cerebellum, olfactory bulb, piriform cortex, hippocampus and hypothalamic nuclei. Moderately expressed in skeletal muscle, heart. Weakly expressed in lung.

Its subcellular location is the nucleus. Functionally, transcriptional repressor involved in the regulation of the circadian rhythm by negatively regulating the activity of the clock genes and clock-controlled genes. Acts as the negative limb of a novel autoregulatory feedback loop (DEC loop) which differs from the one formed by the PER and CRY transcriptional repressors (PER/CRY loop). Both these loops are interlocked as it represses the expression of PER1 and in turn is repressed by PER1/2 and CRY1/2. Represses the activity of the circadian transcriptional activator: CLOCK-BMAL1 heterodimer by competing for the binding to E-box elements (5'-CACGTG-3') found within the promoters of its target genes. Negatively regulates its own expression and the expression of DBP and BHLHE41/DEC2. Acts as a corepressor of RXR and the RXR-LXR heterodimers and represses the ligand-induced RXRA/B/G, NR1H3/LXRA, NR1H4 and VDR transactivation activity. Inhibits HNF1A-mediated transactivation of CYP1A2, CYP2E1 and CYP3A11. The protein is Class E basic helix-loop-helix protein 41 (Bhlhb3) of Rattus norvegicus (Rat).